The chain runs to 656 residues: uncharacterized protein (656 aa).

Residues 623-656 (EIDIPGTPASIDPEWSRPPGSITDDHVFDAPLHR) are disordered. The span at 645 to 656 (TDDHVFDAPLHR) shows a compositional bias: basic and acidic residues.

This is an uncharacterized protein from Mycobacterium tuberculosis (strain CDC 1551 / Oshkosh).